A 274-amino-acid polypeptide reads, in one-letter code: Thiamine kinase (274 aa).

The protein belongs to the thiamine kinase family.

It carries out the reaction thiamine + ATP = thiamine phosphate + ADP + H(+). The protein operates within cofactor biosynthesis; thiamine diphosphate biosynthesis; thiamine phosphate from thiamine: step 1/1. Catalyzes the ATP-dependent phosphorylation of thiamine to thiamine phosphate. Is involved in thiamine salvage. In Escherichia coli (strain SMS-3-5 / SECEC), this protein is Thiamine kinase.